We begin with the raw amino-acid sequence, 419 residues long: DNA primase DnaG (419 aa).

A Toprim domain is found at 174–260 (DAIIVVEGRS…EVEDLEKDEV (87 aa)). Residues Glu180, Asp222, and Asp224 each coordinate Mg(2+). The tract at residues 277-314 (HNILSESDSKNSHKKHNGKHNNKHSNNKHQQHETKVKE) is disordered. Residues 288 to 305 (SHKKHNGKHNNKHSNNKH) show a composition bias toward basic residues.

It belongs to the archaeal DnaG primase family. In terms of assembly, forms a ternary complex with MCM helicase and DNA. Component of the archaeal exosome complex. Mg(2+) serves as cofactor.

The catalysed reaction is ssDNA + n NTP = ssDNA/pppN(pN)n-1 hybrid + (n-1) diphosphate.. Functionally, RNA polymerase that catalyzes the synthesis of short RNA molecules used as primers for DNA polymerase during DNA replication. Also part of the exosome, which is a complex involved in RNA degradation. Acts as a poly(A)-binding protein that enhances the interaction between heteromeric, adenine-rich transcripts and the exosome. In Methanobrevibacter smithii (strain ATCC 35061 / DSM 861 / OCM 144 / PS), this protein is DNA primase DnaG.